We begin with the raw amino-acid sequence, 456 residues long: Anthranilate synthase component 1 (456 aa).

L-tryptophan is bound by residues Ser31 and 244-246 (SYM). 279–280 (GT) is a chorismate binding site. A Mg(2+)-binding site is contributed by Glu306. Residues Tyr394, Arg414, 428 to 430 (GAG), and Gly430 contribute to the chorismate site. Glu443 is a binding site for Mg(2+).

Belongs to the anthranilate synthase component I family. Heterotetramer consisting of two non-identical subunits: a beta subunit (TrpG) and a large alpha subunit (TrpE). Requires Mg(2+) as cofactor.

It catalyses the reaction chorismate + L-glutamine = anthranilate + pyruvate + L-glutamate + H(+). Its pathway is amino-acid biosynthesis; L-tryptophan biosynthesis; L-tryptophan from chorismate: step 1/5. With respect to regulation, feedback inhibited by tryptophan. Its function is as follows. Part of a heterotetrameric complex that catalyzes the two-step biosynthesis of anthranilate, an intermediate in the biosynthesis of L-tryptophan. In the first step, the glutamine-binding beta subunit (TrpG) of anthranilate synthase (AS) provides the glutamine amidotransferase activity which generates ammonia as a substrate that, along with chorismate, is used in the second step, catalyzed by the large alpha subunit of AS (TrpE) to produce anthranilate. In the absence of TrpG, TrpE can synthesize anthranilate directly from chorismate and high concentrations of ammonia. In Lactococcus lactis subsp. lactis (strain IL1403) (Streptococcus lactis), this protein is Anthranilate synthase component 1 (trpE).